The chain runs to 290 residues: Lipoyl synthase (290 aa).

[4Fe-4S] cluster contacts are provided by cysteine 32, cysteine 37, cysteine 43, cysteine 58, cysteine 62, cysteine 65, and serine 272. The Radical SAM core domain occupies tryptophan 44 to lysine 261.

This sequence belongs to the radical SAM superfamily. Lipoyl synthase family. [4Fe-4S] cluster is required as a cofactor.

It is found in the cytoplasm. It carries out the reaction [[Fe-S] cluster scaffold protein carrying a second [4Fe-4S](2+) cluster] + N(6)-octanoyl-L-lysyl-[protein] + 2 oxidized [2Fe-2S]-[ferredoxin] + 2 S-adenosyl-L-methionine + 4 H(+) = [[Fe-S] cluster scaffold protein] + N(6)-[(R)-dihydrolipoyl]-L-lysyl-[protein] + 4 Fe(3+) + 2 hydrogen sulfide + 2 5'-deoxyadenosine + 2 L-methionine + 2 reduced [2Fe-2S]-[ferredoxin]. It functions in the pathway protein modification; protein lipoylation via endogenous pathway; protein N(6)-(lipoyl)lysine from octanoyl-[acyl-carrier-protein]: step 2/2. Functionally, catalyzes the radical-mediated insertion of two sulfur atoms into the C-6 and C-8 positions of the octanoyl moiety bound to the lipoyl domains of lipoate-dependent enzymes, thereby converting the octanoylated domains into lipoylated derivatives. The sequence is that of Lipoyl synthase from Pyrobaculum aerophilum (strain ATCC 51768 / DSM 7523 / JCM 9630 / CIP 104966 / NBRC 100827 / IM2).